We begin with the raw amino-acid sequence, 638 residues long: Threonine--tRNA ligase 2 (638 aa).

Residues 1–64 (MSKHVHIQLP…EEDAELSIVT (64 aa)) enclose the TGS domain. Residues 245-535 (DHRKLGKQLG…LIEHYGGAFP (291 aa)) form a catalytic region. Zn(2+)-binding residues include cysteine 336, histidine 387, and histidine 512.

The protein belongs to the class-II aminoacyl-tRNA synthetase family. As to quaternary structure, homodimer. The cofactor is Zn(2+).

The protein resides in the cytoplasm. It carries out the reaction tRNA(Thr) + L-threonine + ATP = L-threonyl-tRNA(Thr) + AMP + diphosphate + H(+). Catalyzes the attachment of threonine to tRNA(Thr) in a two-step reaction: L-threonine is first activated by ATP to form Thr-AMP and then transferred to the acceptor end of tRNA(Thr). Also edits incorrectly charged L-seryl-tRNA(Thr). This Bacillus subtilis (strain 168) protein is Threonine--tRNA ligase 2 (thrZ).